The primary structure comprises 103 residues: Large ribosomal subunit protein bL21 (103 aa).

Belongs to the bacterial ribosomal protein bL21 family. In terms of assembly, part of the 50S ribosomal subunit. Contacts protein L20.

In terms of biological role, this protein binds to 23S rRNA in the presence of protein L20. In Leptothrix cholodnii (strain ATCC 51168 / LMG 8142 / SP-6) (Leptothrix discophora (strain SP-6)), this protein is Large ribosomal subunit protein bL21.